The following is an 81-amino-acid chain: UPF0410 protein YwzA (81 aa).

Helical transmembrane passes span 1 to 21 (MSFL…SLFV), 27 to 47 (GGII…HGLL), and 56 to 76 (GFAI…VSLL).

It belongs to the UPF0410 family.

The protein localises to the cell membrane. The chain is UPF0410 protein YwzA (ywzA) from Bacillus subtilis (strain 168).